A 333-amino-acid chain; its full sequence is Tetraacyldisaccharide 4'-kinase (333 aa).

55 to 62 provides a ligand contact to ATP; sequence TIGGNGKT.

The protein belongs to the LpxK family.

It catalyses the reaction a lipid A disaccharide + ATP = a lipid IVA + ADP + H(+). It functions in the pathway glycolipid biosynthesis; lipid IV(A) biosynthesis; lipid IV(A) from (3R)-3-hydroxytetradecanoyl-[acyl-carrier-protein] and UDP-N-acetyl-alpha-D-glucosamine: step 6/6. Transfers the gamma-phosphate of ATP to the 4'-position of a tetraacyldisaccharide 1-phosphate intermediate (termed DS-1-P) to form tetraacyldisaccharide 1,4'-bis-phosphate (lipid IVA). The protein is Tetraacyldisaccharide 4'-kinase of Blochmanniella floridana.